We begin with the raw amino-acid sequence, 30 residues long: Cyclotide cter-O (30 aa).

Residues 1–30 constitute a cross-link (cyclopeptide (Gly-Asn)); the sequence is GIPCGESCVFIPCITGIAGCSCKSKVCYRN. Cystine bridges form between cysteine 4/cysteine 20, cysteine 8/cysteine 22, and cysteine 13/cysteine 27.

Post-translationally, this is a cyclic peptide.

Its subcellular location is the secreted. In terms of biological role, probably participates in a plant defense mechanism. The sequence is that of Cyclotide cter-O from Clitoria ternatea (Butterfly pea).